The primary structure comprises 156 residues: 6,7-dimethyl-8-ribityllumazine synthase (156 aa).

Residues Phe-25, 59–61, and 83–85 each bind 5-amino-6-(D-ribitylamino)uracil; these read AWE and AVI. 88–89 lines the (2S)-2-hydroxy-3-oxobutyl phosphate pocket; sequence ST. The active-site Proton donor is the His-91. Asn-116 contributes to the 5-amino-6-(D-ribitylamino)uracil binding site. Residue Arg-130 coordinates (2S)-2-hydroxy-3-oxobutyl phosphate.

It belongs to the DMRL synthase family. As to quaternary structure, forms an icosahedral capsid composed of 60 subunits, arranged as a dodecamer of pentamers.

It catalyses the reaction (2S)-2-hydroxy-3-oxobutyl phosphate + 5-amino-6-(D-ribitylamino)uracil = 6,7-dimethyl-8-(1-D-ribityl)lumazine + phosphate + 2 H2O + H(+). The protein operates within cofactor biosynthesis; riboflavin biosynthesis; riboflavin from 2-hydroxy-3-oxobutyl phosphate and 5-amino-6-(D-ribitylamino)uracil: step 1/2. Functionally, catalyzes the formation of 6,7-dimethyl-8-ribityllumazine by condensation of 5-amino-6-(D-ribitylamino)uracil with 3,4-dihydroxy-2-butanone 4-phosphate. This is the penultimate step in the biosynthesis of riboflavin. This is 6,7-dimethyl-8-ribityllumazine synthase from Acinetobacter baylyi (strain ATCC 33305 / BD413 / ADP1).